Reading from the N-terminus, the 586-residue chain is MTLLNKSIRYYVDFDQWGINAFNSNPIETTKGFNEALIYASENNFPIVEVPKGNFIIDSVNTLNQRNPEIGGGIKIPSNMELLLDPEAVFQVNPNGYQGYSCFYIGLAENVIIRGGRIIGDRYQHDYSLIDTDRKTHEWGFGIHVHGSKNVLIENVQISDCIGDNIWIAAHGMMNYPGMVYTPSKSVTVRKCELKRGRRNNLATNGCEGLLVEDCDIEEAGGDTIGPQLGIDLEGYGENGRKYDHPYELTISDCRFRKNGRGSVTAHTSGKVSIKDNYCDNVISYGYSTDVSIKGNKIINEGGSKEYGIDSVGVSSTETGNRIQITDNNIQGFKIGMMIRGKGVSIDNNTVKNASNCAIATHMAEDVSISNNRIQDSDCIQIQVRNSSDIKVSNNKGKGTTSAYAIKVMDSNDVKFLNNTFSNLYGGLYCERSQAVRIKLNDFLLSGKGYGIYWDKDSEVFLTRNEIFEPRNVAIMGAADMYNIRISDNQIYNCKAIIAIHLIGGSEHMVRGNEIMFNRDSDQGYGIYLNGTKKVRLIRNDVQGIGARVLSHPFATFNASSTTLIHNTYDSGTPRLALDDTVIDYK.

PbH1 repeat units follow at residues 108–147 (AENVIIRGGRIIGDRYQHDYSLIDTDRKTHEWGFGIHVHG), 148–170 (SKNVLIENVQISDCIGDNIWIAA), 184–206 (SKSVTVRKCELKRGRRNNLATNG), 207–235 (CEGLLVEDCDIEEAGGDTIGPQLGIDLEG), 246–268 (PYELTISDCRFRKNGRGSVTAHT), 288–313 (STDVSIKGNKIINEGGSKEYGIDSVG), 320–341 (GNRIQITDNNIQGFKIGMMIRG), 364–384 (AEDVSISNNRIQDSDCIQIQV), 387–410 (SSDIKVSNNKGKGTTSAYAIKVMD), 411–432 (SNDVKFLNNTFSNLYGGLYCER), 435–456 (AVRIKLNDFLLSGKGYGIYWDK), 481–504 (MYNIRISDNQIYNCKAIIAIHLIG), and 505–531 (GSEHMVRGNEIMFNRDSDQGYGIYLNG).

The sequence is that of SPbeta prophage-derived uncharacterized protein YorA (yorA) from Bacillus subtilis (strain 168).